Here is a 249-residue protein sequence, read N- to C-terminus: RNA polymerase sigma factor SigI3 (249 aa).

The short motif at Glu60–Ile73 is the Polymerase core binding element. Positions Met199 to Lys218 form a DNA-binding region, H-T-H motif.

The protein belongs to the sigma-70 factor family. SigI subfamily. Interacts with RsgI3.

It is found in the cytoplasm. With respect to regulation, negatively regulated by the anti-sigma-I factor RsgI3. Binding of the polysaccharide substrate to RsgI3 may lead to the release and activation of SigI3. Its function is as follows. Sigma factors are initiation factors that promote the attachment of RNA polymerase to specific initiation sites and are then released. This sigma factor is involved in regulation of cellulosomal genes via an external polysaccharide-sensing mechanism. Recognizes the predicted promoters associated with sigI3 itself, pl11, ce12 and cipA. In Acetivibrio thermocellus (strain ATCC 27405 / DSM 1237 / JCM 9322 / NBRC 103400 / NCIMB 10682 / NRRL B-4536 / VPI 7372) (Clostridium thermocellum), this protein is RNA polymerase sigma factor SigI3.